A 426-amino-acid polypeptide reads, in one-letter code: MSGYPGAGYNGGGYVPPPQPQYGGYYPPQPAYNAYQQPPPQQQQYMVYHQPSPGPQQHQHWNPQQQTPAPQGYGNPPNSHYGRPEANMPTVNSNSYAHGNHQAPPPPPQAPQQFGYGAPADYAFRYSQCNGRHKALLIGINYFGQRGQLRGCINDVRNMSSYLVEHFRYKREDMVILTDDQQNPMSQPTKQNILRAMHWLVKDARPNDSLFFHYSGHGGQTKDLDGDEEDGYDEVIYPVDFRQVGHITDDEMHRIMVRPLQAGVRLTAIFDSCHSGTALDLPYIYSTQGILKEPNLAKEAGQGLLGAISSYSQGDLYGVANNIMGIFKKATGGNDAHARTLATKTSPADVVMFSGSKDDQTSADATIASQATGAMSWAFINALKKNPQQSYVQLLNSIRDELQMRYTQKPQLSCSHPLDTNLLFVM.

A compositionally biased stretch (gly residues) spans 1–14 (MSGYPGAGYNGGGY). The segment at 1–111 (MSGYPGAGYN…QAPPPPPQAP (111 aa)) is disordered. Positions 21 to 68 (QYGGYYPPQPAYNAYQQPPPQQQQYMVYHQPSPGPQQHQHWNPQQQTP) are enriched in low complexity. Active-site residues include His217 and Cys273.

This sequence belongs to the peptidase C14B family.

In terms of biological role, involved in cell death (apoptosis). In Neurospora crassa (strain ATCC 24698 / 74-OR23-1A / CBS 708.71 / DSM 1257 / FGSC 987), this protein is Metacaspase-1B (casB).